Consider the following 366-residue polypeptide: Chorismate synthase (366 aa).

NADP(+) is bound by residues arginine 48 and arginine 54. FMN-binding positions include 125–127 (RSS), 238–239 (NA), glycine 278, 293–297 (KPTSS), and arginine 319.

It belongs to the chorismate synthase family. As to quaternary structure, homotetramer. The cofactor is FMNH2.

It carries out the reaction 5-O-(1-carboxyvinyl)-3-phosphoshikimate = chorismate + phosphate. It functions in the pathway metabolic intermediate biosynthesis; chorismate biosynthesis; chorismate from D-erythrose 4-phosphate and phosphoenolpyruvate: step 7/7. Functionally, catalyzes the anti-1,4-elimination of the C-3 phosphate and the C-6 proR hydrogen from 5-enolpyruvylshikimate-3-phosphate (EPSP) to yield chorismate, which is the branch point compound that serves as the starting substrate for the three terminal pathways of aromatic amino acid biosynthesis. This reaction introduces a second double bond into the aromatic ring system. The protein is Chorismate synthase of Burkholderia orbicola (strain MC0-3).